We begin with the raw amino-acid sequence, 624 residues long: Polygalacturonase 1 beta-like protein 2 (624 aa).

Residues 1 to 26 form the signal peptide; it reads MNNIEATLFLCFFCIFSSSNVHFAGA. The FXXY 1 repeat unit spans residues 121–124; sequence FAAY. N-linked (GlcNAc...) asparagine glycosylation is present at asparagine 128. FXXY repeat units follow at residues 129-132, 143-146, 157-160, 171-174, 185-188, 199-202, 213-216, 227-230, 241-244, 255-258, and 269-272; these read FTNY, FKNY, FRRY, FTTY, FTSY, FSGY, and FTKY. N-linked (GlcNAc...) asparagine glycosylation occurs at asparagine 145. The interval 199–219 is disordered; sequence FTNYNTDANEPNGRFTSYSDK. Asparagine 280 carries N-linked (GlcNAc...) asparagine glycosylation. FXXY repeat units follow at residues 283–286, 297–300, 311–314, 325–328, and 339–342; these read FTSY, FKGY, FKNY, FSSY, and FVNY. An N-linked (GlcNAc...) asparagine glycan is attached at asparagine 352. An FXXY 18 repeat occupies 353–356; the sequence is FTGY. The N-linked (GlcNAc...) asparagine glycan is linked to asparagine 364. FXXY repeat units lie at residues 367 to 370, 376 to 379, and 386 to 389; these read FKTY, FKVY, and FARY. N-linked (GlcNAc...) asparagine glycosylation is found at asparagine 392 and asparagine 463. Positions 409–623 constitute a BURP domain; sequence FFREAMLKEG…FENDMTWNII (215 aa).

In terms of tissue distribution, expressed in flowers and stems.

The protein localises to the secreted. It is found in the extracellular space. Its subcellular location is the apoplast. The protein resides in the cell wall. Involved in cell size determination. This is Polygalacturonase 1 beta-like protein 2 from Arabidopsis thaliana (Mouse-ear cress).